The chain runs to 185 residues: Ribosome-recycling factor (185 aa).

Belongs to the RRF family.

Its subcellular location is the cytoplasm. In terms of biological role, responsible for the release of ribosomes from messenger RNA at the termination of protein biosynthesis. May increase the efficiency of translation by recycling ribosomes from one round of translation to another. The protein is Ribosome-recycling factor of Pseudarthrobacter chlorophenolicus (strain ATCC 700700 / DSM 12829 / CIP 107037 / JCM 12360 / KCTC 9906 / NCIMB 13794 / A6) (Arthrobacter chlorophenolicus).